A 180-amino-acid polypeptide reads, in one-letter code: Major urinary protein 5 (180 aa).

An N-terminal signal peptide occupies residues 1 to 18 (MKLLLLLCLELTLVYVHA). A disulfide bond links Cys82 and Cys175.

It belongs to the calycin superfamily. Lipocalin family.

The protein localises to the secreted. Functionally, major urinary proteins (Mups) bind pheromones, and thus stabilize them to allow slow release into the air from urine marks. May protect pheromones from oxidation. May also act as pheromones themselves. In this context, they play a role in the regulation of social behaviors, such as aggression, mating, pup-suckling, territory establishment and dominance. This Mus musculus (Mouse) protein is Major urinary protein 5.